A 277-amino-acid polypeptide reads, in one-letter code: Ubiquinone biosynthesis protein COQ4, mitochondrial (277 aa).

The N-terminal 14 residues, Met-1 to Arg-14, are a transit peptide targeting the mitochondrion. His-157, Asp-158, His-161, and Glu-173 together coordinate Zn(2+).

Belongs to the COQ4 family. Component of a multi-subunit COQ enzyme complex, composed of at least COQ3, COQ4, COQ5, COQ6, COQ7 and COQ9. The cofactor is Zn(2+).

It is found in the mitochondrion inner membrane. It carries out the reaction a 4-hydroxy-3-methoxy-5-(all-trans-polyprenyl)benzoate + H(+) = a 2-methoxy-6-(all-trans-polyprenyl)phenol + CO2. Its pathway is cofactor biosynthesis; ubiquinone biosynthesis. Its function is as follows. Lyase that catalyzes the C1-decarboxylation of 4-hydroxy-3-methoxy-5-(all-trans-polyprenyl)benzoic acid into 2-methoxy-6-(all-trans-polyprenyl)phenol during ubiquinone biosynthesis. The chain is Ubiquinone biosynthesis protein COQ4, mitochondrial from Ajellomyces capsulatus (strain G186AR / H82 / ATCC MYA-2454 / RMSCC 2432) (Darling's disease fungus).